The sequence spans 227 residues: ATP-dependent dethiobiotin synthetase BioD (227 aa).

13 to 18 (DIGKTY) contacts ATP. Residue T17 participates in Mg(2+) binding. The active site involves K38. Residue S42 participates in substrate binding. ATP-binding positions include D55, 116 to 119 (EGSG), and 179 to 180 (NN). Residues D55 and E116 each coordinate Mg(2+).

Belongs to the dethiobiotin synthetase family. Homodimer. Requires Mg(2+) as cofactor.

The protein resides in the cytoplasm. The enzyme catalyses (7R,8S)-7,8-diammoniononanoate + CO2 + ATP = (4R,5S)-dethiobiotin + ADP + phosphate + 3 H(+). The protein operates within cofactor biosynthesis; biotin biosynthesis; biotin from 7,8-diaminononanoate: step 1/2. Catalyzes a mechanistically unusual reaction, the ATP-dependent insertion of CO2 between the N7 and N8 nitrogen atoms of 7,8-diaminopelargonic acid (DAPA, also called 7,8-diammoniononanoate) to form a ureido ring. The sequence is that of ATP-dependent dethiobiotin synthetase BioD from Clostridium botulinum (strain Langeland / NCTC 10281 / Type F).